The chain runs to 218 residues: Deoxyribose-phosphate aldolase (218 aa).

Residue Asp89 is the Proton donor/acceptor of the active site. Lys152 serves as the catalytic Schiff-base intermediate with acetaldehyde. Lys182 (proton donor/acceptor) is an active-site residue.

This sequence belongs to the DeoC/FbaB aldolase family. DeoC type 1 subfamily.

The protein resides in the cytoplasm. It catalyses the reaction 2-deoxy-D-ribose 5-phosphate = D-glyceraldehyde 3-phosphate + acetaldehyde. Its pathway is carbohydrate degradation; 2-deoxy-D-ribose 1-phosphate degradation; D-glyceraldehyde 3-phosphate and acetaldehyde from 2-deoxy-alpha-D-ribose 1-phosphate: step 2/2. In terms of biological role, catalyzes a reversible aldol reaction between acetaldehyde and D-glyceraldehyde 3-phosphate to generate 2-deoxy-D-ribose 5-phosphate. This Kocuria rhizophila (strain ATCC 9341 / DSM 348 / NBRC 103217 / DC2201) protein is Deoxyribose-phosphate aldolase.